A 227-amino-acid polypeptide reads, in one-letter code: Ornithine decarboxylase antizyme 1 (227 aa).

The segment at 20–50 is disordered; it reads EGDKPSATVHATRTMPLLSLHSRGGRSSESS. Low complexity predominate over residues 36-50; that stretch reads LLSLHSRGGRSSESS.

The protein belongs to the ODC antizyme family. In terms of assembly, interacts with ODC1 and thereby sterically blocks ODC homodimerization. Forms a ternary complex with PSMB4 and OAZ1 before PSMB4 is incorporated into the 20S proteasome. Interacts with AZIN2; this interaction disrupts the interaction between the antizyme and ODC1. Interacts with FAM171A1.

Its function is as follows. Ornithine decarboxylase (ODC) antizyme protein that negatively regulates ODC activity and intracellular polyamine biosynthesis and uptake in response to increased intracellular polyamine levels. Binds to ODC monomers, inhibiting the assembly of the functional ODC homodimer, and targets the monomers for ubiquitin-independent proteolytic destruction by the 26S proteasome. Triggers ODC degradation by inducing the exposure of a cryptic proteasome-interacting surface of ODC. Stabilizes AZIN2 by interfering with its ubiquitination. Also inhibits cellular uptake of polyamines by inactivating the polyamine uptake transporter. SMAD1/OAZ1/PSMB4 complex mediates the degradation of the CREBBP/EP300 repressor SNIP1. Involved in the translocation of AZIN2 from ER-Golgi intermediate compartment (ERGIC) to the cytosol. This chain is Ornithine decarboxylase antizyme 1 (OAZ1), found in Bos taurus (Bovine).